The primary structure comprises 757 residues: Polyribonucleotide nucleotidyltransferase (757 aa).

The Mg(2+) site is built by aspartate 532 and aspartate 538. Positions 598–657 constitute a KH domain; the sequence is PRVTAIKVPVDKIGEVIGPKGKMINSITEQTGANISIEDDGTVFVGATDGPSAQAAIDMI. The 70-residue stretch at 669–738 folds into the S1 motif domain; that stretch reads GERFLGTVVK…NRGKISLIPV (70 aa).

This sequence belongs to the polyribonucleotide nucleotidyltransferase family. Requires Mg(2+) as cofactor.

The protein resides in the cytoplasm. It catalyses the reaction RNA(n+1) + phosphate = RNA(n) + a ribonucleoside 5'-diphosphate. Functionally, involved in mRNA degradation. Catalyzes the phosphorolysis of single-stranded polyribonucleotides processively in the 3'- to 5'-direction. This is Polyribonucleotide nucleotidyltransferase from Rhodococcus jostii (strain RHA1).